A 731-amino-acid polypeptide reads, in one-letter code: Inclusion body clearance protein IML2 (731 aa).

The segment at 1–26 (MFRVFGSFGSKGNQSSGEEQSTKTKQ) is disordered. The segment covering 10-26 (SKGNQSSGEEQSTKTKQ) has biased composition (polar residues). A phosphoserine mark is found at serine 265, serine 268, and serine 378. A Phosphothreonine modification is found at threonine 380. Serine 383 and serine 392 each carry phosphoserine.

Belongs to the IML2 family. As to quaternary structure, interacts with lipid droplet proteins PET10 and PDR16.

The protein resides in the cytoplasm. It is found in the nucleus. Inclusion body (IB) resident protein that interacts strongly with lipid droplet (LD) proteins. Involved in LD-mediated IB clearing after protein folding stress, probably by enabling access to the IBs of an LD-stored soluble sterol derivative that acts as a chaperone in inclusion clearing. This chain is Inclusion body clearance protein IML2, found in Saccharomyces cerevisiae (strain ATCC 204508 / S288c) (Baker's yeast).